We begin with the raw amino-acid sequence, 267 residues long: 3-isopropylmalate dehydratase large subunit (267 aa).

Positions 146, 206, and 209 each coordinate [4Fe-4S] cluster.

This sequence belongs to the aconitase/IPM isomerase family. LeuC type 1 subfamily. As to quaternary structure, heterodimer of LeuC and LeuD. The cofactor is [4Fe-4S] cluster.

The enzyme catalyses (2R,3S)-3-isopropylmalate = (2S)-2-isopropylmalate. The protein operates within amino-acid biosynthesis; L-leucine biosynthesis; L-leucine from 3-methyl-2-oxobutanoate: step 2/4. Catalyzes the isomerization between 2-isopropylmalate and 3-isopropylmalate, via the formation of 2-isopropylmaleate. The chain is 3-isopropylmalate dehydratase large subunit (leuC) from Cupriavidus necator (Alcaligenes eutrophus).